A 283-amino-acid chain; its full sequence is Peroxisomal protein 2 (283 aa).

The short motif at 281 to 283 (VKL) is the Peroxisomal target signal 1 (PTS1) element.

This sequence belongs to the PXP2 family.

Its subcellular location is the peroxisome matrix. The protein resides in the cytoplasm. It localises to the cytosol. Its function is as follows. Probably involved in peroxisome formation or maintenance as well as in amino acid metabolism. The polypeptide is Peroxisomal protein 2 (Saccharomyces cerevisiae (strain ATCC 204508 / S288c) (Baker's yeast)).